The sequence spans 507 residues: MEFPVLTVNPAKIETACLVVPVFKDGDLLPAADKLDDASERLIGQLLDRGDFEPSLGNVQLIPFAPGLGAERLLLVGLGERAKCGESQLIKALDAAFGAIAKLPLDDVAATFTDVPVGERDTAWKARVTLEAAHRACYRFDEFKSEPAPAPRLSSLTLLVGDEDQAAQAELGARVGAAVGEGVSLTRTLGNLPGNVCTPRYLADQAQRLADGADGALNVEILDEDALEALGANALLAVGQGSAEPSRLIVMEYRGAEDPEEAPHILVGKGITFDSGGISLKPGAGMDEMKFDMCGAASVFGTMKTVLGLKPRINVIGVVASAENMPDGRAIKPGDIVKTLKGLNVEILNTDAEGRMVLCDALSYVERFKPASVVDIATLTGAAIIALGHHASGLLSNDDDLALDLLDAGENAWDRAWHLPLWDEYQSQLDSNFADLAHIGGRPAGTITAACFLSRFADAYPWAHLDIAGTAWASGDKKGASGRPVGLLTQYLLDRETEAAETRPSVE.

Residues K269 and D274 each coordinate Mn(2+). Residue K281 is part of the active site. Mn(2+) contacts are provided by D292, D351, and E353. R355 is an active-site residue.

The protein belongs to the peptidase M17 family. Mn(2+) serves as cofactor.

The protein localises to the cytoplasm. The catalysed reaction is Release of an N-terminal amino acid, Xaa-|-Yaa-, in which Xaa is preferably Leu, but may be other amino acids including Pro although not Arg or Lys, and Yaa may be Pro. Amino acid amides and methyl esters are also readily hydrolyzed, but rates on arylamides are exceedingly low.. It catalyses the reaction Release of an N-terminal amino acid, preferentially leucine, but not glutamic or aspartic acids.. In terms of biological role, presumably involved in the processing and regular turnover of intracellular proteins. Catalyzes the removal of unsubstituted N-terminal amino acids from various peptides. This is Probable cytosol aminopeptidase from Chromohalobacter salexigens (strain ATCC BAA-138 / DSM 3043 / CIP 106854 / NCIMB 13768 / 1H11).